Here is a 554-residue protein sequence, read N- to C-terminus: Glucose-6-phosphate isomerase (554 aa).

Glu359 functions as the Proton donor in the catalytic mechanism. Residues His390 and Lys518 contribute to the active site.

It belongs to the GPI family.

It localises to the cytoplasm. The enzyme catalyses alpha-D-glucose 6-phosphate = beta-D-fructose 6-phosphate. It functions in the pathway carbohydrate biosynthesis; gluconeogenesis. It participates in carbohydrate degradation; glycolysis; D-glyceraldehyde 3-phosphate and glycerone phosphate from D-glucose: step 2/4. Its function is as follows. Catalyzes the reversible isomerization of glucose-6-phosphate to fructose-6-phosphate. In Stutzerimonas stutzeri (strain A1501) (Pseudomonas stutzeri), this protein is Glucose-6-phosphate isomerase.